The chain runs to 1510 residues: Cysteine-tryptophan domain-containing zinc finger protein 5 (1510 aa).

Residues 174-196 (YCQRTSSENDSNHSQQLLNSGPE) are compositionally biased toward polar residues. Disordered regions lie at residues 174–198 (YCQR…PEQK), 449–497 (SSLD…CAKD), 555–574 (KPNY…YVLD), and 582–616 (LHTE…DHKI). Residues 454 to 465 (GFSHKTKSDKCN) show a composition bias toward basic and acidic residues. Residues 467-476 (QPVTTSSQLQ) show a composition bias toward polar residues. Composition is skewed to basic and acidic residues over residues 479 to 497 (PAKK…CAKD) and 556 to 574 (PNYD…YVLD). The CW-type zinc-finger motif lies at 645-698 (SEPVDQWVCCDKCETWRLLPYGMNSDTLPKKWRCSMQSWLPGMNNCKLSEGETT). Residues Cys-654, Cys-657, Cys-678, and Cys-690 each coordinate Zn(2+). A compositionally biased stretch (basic and acidic residues) spans 768–780 (KQKRIESSDKGEK). Disordered regions lie at residues 768-893 (KQKR…RDLF), 1003-1050 (STAA…LDRH), and 1149-1194 (LPIH…VRPD). Positions 781 to 790 (STVTISSGQT) are enriched in polar residues. The span at 874 to 893 (NSDRGARASDAGKSDPRDLF) shows a compositional bias: basic and acidic residues. The segment covering 1003-1016 (STAATSSSSKVSSS) has biased composition (low complexity). 2 stretches are compositionally biased toward polar residues: residues 1026 to 1040 (TRTS…SPLR) and 1162 to 1182 (PDQN…QAKL).

As to expression, highly expressed in young panicles. Expressed at low levels in leaf sheaths, nodes, internodes and axillary buds.

The protein localises to the nucleus. Binds to histones H3K4me1, H3K4me2 and H3K4me3 in GST pull-down assay. May facilitate the recruitment of effectors to mediate gene expression. This Oryza sativa subsp. japonica (Rice) protein is Cysteine-tryptophan domain-containing zinc finger protein 5.